A 367-amino-acid polypeptide reads, in one-letter code: Probable ATP-dependent RNA helicase MJ0669 (367 aa).

Residues 6–34 (MNFNELNLSDNILNAIRNKGFEKPTDIQM) carry the Q motif motif. The 169-residue stretch at 38-206 (PLFLNDEYNI…KKYMGDYSFI (169 aa)) folds into the Helicase ATP-binding domain. Position 51–58 (51–58 (ARTGSGKT)) interacts with ATP. Residues 154 to 157 (DEAD) carry the DEAD box motif. One can recognise a Helicase C-terminal domain in the interval 213–367 (NIEQSYVEVN…KLKIKKLKFG (155 aa)).

It belongs to the DEAD box helicase family. As to quaternary structure, homodimer.

The enzyme catalyses ATP + H2O = ADP + phosphate + H(+). The chain is Probable ATP-dependent RNA helicase MJ0669 from Methanocaldococcus jannaschii (strain ATCC 43067 / DSM 2661 / JAL-1 / JCM 10045 / NBRC 100440) (Methanococcus jannaschii).